The sequence spans 109 residues: Tetracenomycin F2 cyclase (109 aa).

In terms of assembly, homodimer.

The enzyme catalyses tetracenomycin F2 + H(+) = tetracenomycin F1 + H2O. Its pathway is antibiotic biosynthesis; tetracenomycin C biosynthesis. Catalyzing the conversion of tetracenomycin F2 to tetracenomycin F1. The sequence is that of Tetracenomycin F2 cyclase (tcmI) from Streptomyces glaucescens.